We begin with the raw amino-acid sequence, 157 residues long: 6,7-dimethyl-8-ribityllumazine synthase (157 aa).

Residues Phe22, 56–58 (AFE), and 81–83 (VLI) contribute to the 5-amino-6-(D-ribitylamino)uracil site. Position 86-87 (86-87 (ET)) interacts with (2S)-2-hydroxy-3-oxobutyl phosphate. His89 functions as the Proton donor in the catalytic mechanism. Residue Phe114 participates in 5-amino-6-(D-ribitylamino)uracil binding. A (2S)-2-hydroxy-3-oxobutyl phosphate-binding site is contributed by Arg128.

Belongs to the DMRL synthase family.

It catalyses the reaction (2S)-2-hydroxy-3-oxobutyl phosphate + 5-amino-6-(D-ribitylamino)uracil = 6,7-dimethyl-8-(1-D-ribityl)lumazine + phosphate + 2 H2O + H(+). It functions in the pathway cofactor biosynthesis; riboflavin biosynthesis; riboflavin from 2-hydroxy-3-oxobutyl phosphate and 5-amino-6-(D-ribitylamino)uracil: step 1/2. Catalyzes the formation of 6,7-dimethyl-8-ribityllumazine by condensation of 5-amino-6-(D-ribitylamino)uracil with 3,4-dihydroxy-2-butanone 4-phosphate. This is the penultimate step in the biosynthesis of riboflavin. The sequence is that of 6,7-dimethyl-8-ribityllumazine synthase from Chlamydia muridarum (strain MoPn / Nigg).